The primary structure comprises 268 residues: Ribosomal RNA small subunit methyltransferase A (268 aa).

Residues Asn16, Leu18, Gly43, Glu64, Asp89, and Asn110 each contribute to the S-adenosyl-L-methionine site.

The protein belongs to the class I-like SAM-binding methyltransferase superfamily. rRNA adenine N(6)-methyltransferase family. RsmA subfamily.

Its subcellular location is the cytoplasm. The catalysed reaction is adenosine(1518)/adenosine(1519) in 16S rRNA + 4 S-adenosyl-L-methionine = N(6)-dimethyladenosine(1518)/N(6)-dimethyladenosine(1519) in 16S rRNA + 4 S-adenosyl-L-homocysteine + 4 H(+). Its function is as follows. Specifically dimethylates two adjacent adenosines (A1518 and A1519) in the loop of a conserved hairpin near the 3'-end of 16S rRNA in the 30S particle. May play a critical role in biogenesis of 30S subunits. The protein is Ribosomal RNA small subunit methyltransferase A of Pseudomonas aeruginosa (strain ATCC 15692 / DSM 22644 / CIP 104116 / JCM 14847 / LMG 12228 / 1C / PRS 101 / PAO1).